Reading from the N-terminus, the 268-residue chain is Zwei Ig domain protein zig-8 (268 aa).

A signal peptide spans 1–21 (MRRFSNICVILFSFLYATGHG). 2 consecutive Ig-like C2-type domains span residues 40–128 (PSQT…NTVY) and 140–251 (PSPS…NSAT). An intrachain disulfide couples cysteine 57 to cysteine 118. Asparagine 82, asparagine 155, asparagine 164, and asparagine 191 each carry an N-linked (GlcNAc...) asparagine glycan. Residues cysteine 165 and cysteine 226 are joined by a disulfide bond.

Expressed in PVT neurons and pharyngeal muscles.

It is found in the secreted. Functionally, together with zig-5, required postembryonically to maintain the position of ASI and ASH head neuron cell bodies and ventral nerve cord axons of PVQ, PVP and HSN neurons by preventing their displacement that could occur during body growth and movement. May act by reducing L1CAM-like protein sax-7 (long isoform) adhesion. This is Zwei Ig domain protein zig-8 from Caenorhabditis elegans.